A 728-amino-acid chain; its full sequence is MTKQVFKTVFAGRELVVETGQVAKQANGSAVVRYGESTVLTAATMSKKMATGDFFPLQVNYEEKMYAAGKYPGGFNKREGRPSTDATLTARLIDRPIRPMFAEGFRNEVQVINTVLSYDEDASPQMAAMFGSSLALSISDIPFNGPIAGVQVGYVDGEFIINPSKEQKEVSLLELTVAGTKDAINMVESGAKELSEDVMLEALLKGHQAVKELIAFQEEIVAAVGKEKAEVELLHVDEELQAEIVAAYNSDLQKAVQVEEKLAREAATQAVKDQVTAVYEEKYADHEEFDRIMRDVAEILEQMEHAEVRRLITEDKVRPDGRKVDEIRPLDAEVDYLPRVHGSGLFTRGQTQALSVLTLAPMGETQIVDGLDPEYKKRFMHHYNFPQYSVGETGRYGAPGRREIGHGALGERALEQVLPSLEEFPYAIRLVAEVLESNGSSSQASICAGTLALMAGGVPIKAPVAGIAMGLISDGNNYTVLTDIQGLEDHFGDMDFKVAGTREGITALQMDIKIEGITAEILTEALDQAKKARFEILDLIEATIPAPRPELAPTAPKIDTIKIDVDKIKIVIGKGGETIDKIIAETGVKIDIDEEGNVSIYSSDQDAINRAKEIIAGLVREAKVDEVYHAKVVRIEKFGAFVNLFDKTDALVHISELAWTRTNNVEDVVQIGDEVDVMVIKIDAKGRVDASMKALLPRPPKPEKSDKHHDKGHPHKKHEEAPLTQTEE.

Residues D489 and D495 each contribute to the Mg(2+) site. The 60-residue stretch at 556-615 folds into the KH domain; that stretch reads PKIDTIKIDVDKIKIVIGKGGETIDKIIAETGVKIDIDEEGNVSIYSSDQDAINRAKEII. The region spanning 625–693 is the S1 motif domain; that stretch reads DEVYHAKVVR…AKGRVDASMK (69 aa). Positions 691–728 are disordered; the sequence is SMKALLPRPPKPEKSDKHHDKGHPHKKHEEAPLTQTEE. A compositionally biased stretch (basic and acidic residues) spans 700–709; it reads PKPEKSDKHH.

The protein belongs to the polyribonucleotide nucleotidyltransferase family. Mg(2+) serves as cofactor.

The protein resides in the cytoplasm. It carries out the reaction RNA(n+1) + phosphate = RNA(n) + a ribonucleoside 5'-diphosphate. Functionally, involved in mRNA degradation. Catalyzes the phosphorolysis of single-stranded polyribonucleotides processively in the 3'- to 5'-direction. This is Polyribonucleotide nucleotidyltransferase from Streptococcus gordonii (strain Challis / ATCC 35105 / BCRC 15272 / CH1 / DL1 / V288).